A 170-amino-acid chain; its full sequence is Large ribosomal subunit protein bL17 (170 aa).

A compositionally biased stretch (low complexity) spans 124-134 (AAEAPKAAKAA). The interval 124-170 (AAEAPKAAKAAPVKEAKPAAEEAPAKPKRTRKPKADEADAEAAKEEN) is disordered. Composition is skewed to basic and acidic residues over residues 135–148 (PVKE…EAPA) and 156–170 (PKAD…KEEN).

It belongs to the bacterial ribosomal protein bL17 family. As to quaternary structure, part of the 50S ribosomal subunit. Contacts protein L32.

This Desulfovibrio desulfuricans (strain ATCC 27774 / DSM 6949 / MB) protein is Large ribosomal subunit protein bL17.